Reading from the N-terminus, the 562-residue chain is MAADAFLLIFGLLLTVLIVAQPLGSGLARLIEGETGTLLQKFETKTARFFALDTTEMRWQQYAAAILALNLIGIVVLFVLLMAQGNLPLNPENMPGLSWHLALNTAVSFVTNTNWQAYSGENTLSYLSQMVGLTVQNFLSAASGIAVAFALIRAFSRRCVDTLGNAWLDLLRITLYVLLPLSLLLALFFVSQGVLQNLLPYQHLTTLDGAAQTLPMGPVASQEAIKLLGTNGGGFFGANSAHPFENPTALSNIVQMLAILLIPTALCFAFGKAVSDKRQGHALLWAMALIFIVAAAVVMKMEVTGNPHLLALGADSAANLEGKETRFGVLTSSLYAVVTTATSTGAVNAMHDSFTALGGMVPLWLMQIGEVVFGGVGSGLYGMLLFVLLTVFIAGLMIGRSPEYLGKKIEVYEMKMTALAILIPPALVLLGTALALSTEAGRGGILNPGAHGFSEVLYAVSSAANNNGSAFAGLSVNTPFYNVLLAVAMLLGRFAVMVPVLAIAGSLVVKKRQPESKGSLSTRSPLFIGMLIAIVLLIGALTFIPALALGPVAEHLQFGLTH.

Helical transmembrane passes span 5–25, 63–83, 132–152, 175–195, 250–270, 279–299, 379–399, 416–436, 483–503, and 526–546; these read AFLL…PLGS, AAAI…LLMA, GLTV…FALI, LYVL…QGVL, LSNI…CFAF, QGHA…AVVM, GLYG…LMIG, MTAL…ALAL, VLLA…VLAI, and LFIG…FIPA.

The protein belongs to the KdpA family. The system is composed of three essential subunits: KdpA, KdpB and KdpC.

It is found in the cell inner membrane. Its function is as follows. Part of the high-affinity ATP-driven potassium transport (or Kdp) system, which catalyzes the hydrolysis of ATP coupled with the electrogenic transport of potassium into the cytoplasm. This subunit binds the periplasmic potassium ions and delivers the ions to the membrane domain of KdpB through an intramembrane tunnel. The polypeptide is Potassium-transporting ATPase potassium-binding subunit (Pectobacterium atrosepticum (strain SCRI 1043 / ATCC BAA-672) (Erwinia carotovora subsp. atroseptica)).